A 240-amino-acid polypeptide reads, in one-letter code: Small ribosomal subunit protein uS3 (240 aa).

The KH type-2 domain occupies 39-107 (IRDFIKKEAK…ELHLNIVEVR (69 aa)). Composition is skewed to basic and acidic residues over residues 212 to 221 (PQARDRRATE) and 231 to 240 (PRRDRDRDAR). The tract at residues 212–240 (PQARDRRATEAQDGPSPRGPRRDRDRDAR) is disordered.

Belongs to the universal ribosomal protein uS3 family. In terms of assembly, part of the 30S ribosomal subunit. Forms a tight complex with proteins S10 and S14.

In terms of biological role, binds the lower part of the 30S subunit head. Binds mRNA in the 70S ribosome, positioning it for translation. In Paracoccus denitrificans (strain Pd 1222), this protein is Small ribosomal subunit protein uS3.